Here is an 83-residue protein sequence, read N- to C-terminus: Small ribosomal subunit protein bS20 (83 aa).

Belongs to the bacterial ribosomal protein bS20 family.

Its function is as follows. Binds directly to 16S ribosomal RNA. This is Small ribosomal subunit protein bS20 from Flavobacterium johnsoniae (strain ATCC 17061 / DSM 2064 / JCM 8514 / BCRC 14874 / CCUG 350202 / NBRC 14942 / NCIMB 11054 / UW101) (Cytophaga johnsonae).